Consider the following 248-residue polypeptide: ATP synthase subunit a, chloroplastic (248 aa).

Helical transmembrane passes span Leu-34–Leu-54, Val-95–Ile-115, Ile-134–Ser-154, and Val-203–Ala-223.

This sequence belongs to the ATPase A chain family. F-type ATPases have 2 components, CF(1) - the catalytic core - and CF(0) - the membrane proton channel. CF(1) has five subunits: alpha(3), beta(3), gamma(1), delta(1), epsilon(1). CF(0) has four main subunits: a, b, b' and c.

Its subcellular location is the plastid. It is found in the chloroplast thylakoid membrane. In terms of biological role, key component of the proton channel; it plays a direct role in the translocation of protons across the membrane. The polypeptide is ATP synthase subunit a, chloroplastic (Guillardia theta (Cryptophyte)).